Reading from the N-terminus, the 92-residue chain is uncharacterized protein (92 aa).

Residues 1-92 (MSDAAAPAQA…PSPSQQQVAA (92 aa)) are disordered.

This is an uncharacterized protein from Caenorhabditis elegans.